An 84-amino-acid chain; its full sequence is Putative UPF0320 protein YAL068W-A (84 aa).

Belongs to the UPF0320 family.

This is Putative UPF0320 protein YAL068W-A from Saccharomyces cerevisiae (strain ATCC 204508 / S288c) (Baker's yeast).